The primary structure comprises 51 residues: Small ribosomal subunit protein uS14 (51 aa).

Zn(2+) is bound by residues cysteine 16, cysteine 19, cysteine 34, and cysteine 37.

The protein belongs to the universal ribosomal protein uS14 family. Zinc-binding uS14 subfamily. In terms of assembly, part of the 30S ribosomal subunit. Zn(2+) is required as a cofactor.

Binds 16S rRNA, required for the assembly of 30S particles. The sequence is that of Small ribosomal subunit protein uS14 from Archaeoglobus fulgidus (strain ATCC 49558 / DSM 4304 / JCM 9628 / NBRC 100126 / VC-16).